Here is a 449-residue protein sequence, read N- to C-terminus: UDP-N-acetylmuramoylalanine--D-glutamate ligase (449 aa).

118–124 (GTNGKTT) contacts ATP.

The protein belongs to the MurCDEF family.

It is found in the cytoplasm. The catalysed reaction is UDP-N-acetyl-alpha-D-muramoyl-L-alanine + D-glutamate + ATP = UDP-N-acetyl-alpha-D-muramoyl-L-alanyl-D-glutamate + ADP + phosphate + H(+). The protein operates within cell wall biogenesis; peptidoglycan biosynthesis. Functionally, cell wall formation. Catalyzes the addition of glutamate to the nucleotide precursor UDP-N-acetylmuramoyl-L-alanine (UMA). The chain is UDP-N-acetylmuramoylalanine--D-glutamate ligase from Staphylococcus haemolyticus (strain JCSC1435).